A 425-amino-acid polypeptide reads, in one-letter code: uncharacterized protein (425 aa).

12 helical membrane-spanning segments follow: residues 15–35 (LICAFTGFNSGLPLFVLSQML), 48–68 (LIGAVTGVMLPYGLKFLWAPL), 84–104 (MLLSQVALLILLYIISLFDPL), 107–127 (LGTVANIALLIAFFSATQDIV), 149–169 (INAYRIAGLIPGGLSLYLAAI), 174–194 (TVFLWTALCMLAGIFMTLFLA), 225–245 (VIQAIGFLLFLFLYKFGDSFA), 271–291 (ALWSSILSGLAGGMIMLKLGI), 295–315 (LWLFGLVQMVTIGGFIWLAAF), 331–351 (VVIAAEYIGVGLGTAAFVAFM), 370–390 (LSALPSKVLGILSGYVVGAVG), and 395–415 (FWFCLFLAIPGMLCLFWVAPL).

To E.coli AmpG and yeast YBR220c.

It localises to the cell inner membrane. This is an uncharacterized protein from Haemophilus influenzae (strain ATCC 51907 / DSM 11121 / KW20 / Rd).